The primary structure comprises 953 residues: 2-oxoglutarate dehydrogenase E1 component (953 aa).

It belongs to the alpha-ketoglutarate dehydrogenase family. As to quaternary structure, homodimer. Part of the 2-oxoglutarate dehydrogenase (OGDH) complex composed of E1 (2-oxoglutarate dehydrogenase), E2 (dihydrolipoamide succinyltransferase) and E3 (dihydrolipoamide dehydrogenase); the complex contains multiple copies of the three enzymatic components (E1, E2 and E3). Thiamine diphosphate serves as cofactor.

It carries out the reaction N(6)-[(R)-lipoyl]-L-lysyl-[protein] + 2-oxoglutarate + H(+) = N(6)-[(R)-S(8)-succinyldihydrolipoyl]-L-lysyl-[protein] + CO2. Its function is as follows. E1 component of the 2-oxoglutarate dehydrogenase (OGDH) complex which catalyzes the decarboxylation of 2-oxoglutarate, the first step in the conversion of 2-oxoglutarate to succinyl-CoA and CO(2). The chain is 2-oxoglutarate dehydrogenase E1 component from Oceanobacillus iheyensis (strain DSM 14371 / CIP 107618 / JCM 11309 / KCTC 3954 / HTE831).